The chain runs to 320 residues: Protein PXR1 (320 aa).

Over residues 1–11 (MGLAGPRKRTK) the composition is skewed to basic residues. Residues 1 to 24 (MGLAGPRKRTKISHDPNNTAWSRS) are disordered. A compositionally biased stretch (polar residues) spans 15–24 (DPNNTAWSRS). The 55-residue stretch at 25–79 (TSGYGHKIMSAQGWTPGSFLGASNAAHADHFTAGSAGHIRVILKDDNLGLGAKLR) folds into the G-patch domain. Residues 152-298 (GEEVQTPQIS…MGRQFTRGRH (147 aa)) form a disordered region. The segment covering 169-182 (KRPKKARKKEKRRA) has biased composition (basic residues). Basic and acidic residues-rich tracts occupy residues 203 to 214 (RKENKEKKKSSD), 243 to 256 (KDPE…HDDS), and 269 to 288 (QESR…EHRP).

The protein belongs to the PINX1 family.

It localises to the nucleus. Its subcellular location is the nucleolus. Involved in rRNA-processing at A0, A1 and A2 sites and negatively regulates telomerase. This is Protein PXR1 (PXR1) from Ajellomyces capsulatus (strain NAm1 / WU24) (Darling's disease fungus).